Consider the following 421-residue polypeptide: Enolase (421 aa).

A (2R)-2-phosphoglycerate-binding site is contributed by Gln-165. Residue Glu-207 is the Proton donor of the active site. The Mg(2+) site is built by Asp-244, Glu-285, and Asp-312. (2R)-2-phosphoglycerate-binding residues include Lys-337, Arg-366, Ser-367, and Lys-388. The active-site Proton acceptor is the Lys-337.

It belongs to the enolase family. The cofactor is Mg(2+).

The protein resides in the cytoplasm. Its subcellular location is the secreted. The protein localises to the cell surface. The enzyme catalyses (2R)-2-phosphoglycerate = phosphoenolpyruvate + H2O. The protein operates within carbohydrate degradation; glycolysis; pyruvate from D-glyceraldehyde 3-phosphate: step 4/5. Its function is as follows. Catalyzes the reversible conversion of 2-phosphoglycerate (2-PG) into phosphoenolpyruvate (PEP). It is essential for the degradation of carbohydrates via glycolysis. In Ehrlichia chaffeensis (strain ATCC CRL-10679 / Arkansas), this protein is Enolase.